We begin with the raw amino-acid sequence, 232 residues long: Imidazole glycerol phosphate synthase subunit HisF (232 aa).

Residues D11 and D130 contribute to the active site.

The protein belongs to the HisA/HisF family. Heterodimer of HisH and HisF.

It localises to the cytoplasm. The enzyme catalyses 5-[(5-phospho-1-deoxy-D-ribulos-1-ylimino)methylamino]-1-(5-phospho-beta-D-ribosyl)imidazole-4-carboxamide + L-glutamine = D-erythro-1-(imidazol-4-yl)glycerol 3-phosphate + 5-amino-1-(5-phospho-beta-D-ribosyl)imidazole-4-carboxamide + L-glutamate + H(+). The protein operates within amino-acid biosynthesis; L-histidine biosynthesis; L-histidine from 5-phospho-alpha-D-ribose 1-diphosphate: step 5/9. Functionally, IGPS catalyzes the conversion of PRFAR and glutamine to IGP, AICAR and glutamate. The HisF subunit catalyzes the cyclization activity that produces IGP and AICAR from PRFAR using the ammonia provided by the HisH subunit. In Listeria monocytogenes serotype 4a (strain HCC23), this protein is Imidazole glycerol phosphate synthase subunit HisF.